The sequence spans 258 residues: Venom plasminogen activator LV-PA (258 aa).

Positions 1–18 are cleaved as a signal peptide; that stretch reads MVLITVLANLLILQLSYA. The propeptide occupies 19–24; that stretch reads QKSSKL. The Peptidase S1 domain occupies 25 to 249; the sequence is VFGGDECNIN…YTDWIQSIIA (225 aa). The N-linked (GlcNAc...) asparagine glycan is linked to Asn-44. Cysteines 50 and 66 form a disulfide. Residues His-65 and Asp-110 each act as charge relay system in the active site. 3 cysteine pairs are disulfide-bonded: Cys-142–Cys-210, Cys-174–Cys-189, and Cys-200–Cys-225. Ser-204 serves as the catalytic Charge relay system.

Belongs to the peptidase S1 family. Snake venom subfamily. Monomer. In terms of processing, N-glycosylated. PubMed:17034951 shows that it contains approximately 10% carbohydrates, PubMed:10871053 shows that it contains approximately 20% carbohydrates. In terms of tissue distribution, expressed by the venom gland.

The protein localises to the secreted. With respect to regulation, inhibited by the serine protease inhibitors NPGB, PMSF, p-aminobenzamidine and aprotinin. Not inhibited by soybean trypsin inhibitor or EDTA. Functionally, snake venom serine protease that activates plasminogen. Weakly hydrolyzes the alpha chain of human fibrinogen without releasing fibrinopeptide A. Does not hydrolyze plasma kallikrein or factor Xa. Does not clot fibrinogen. Does not affect platelet function. Induces hypotensive effects on rats. Shows a preferential cleavage at Lys-|-Xaa over Arg-|-Xaa bonds. This chain is Venom plasminogen activator LV-PA, found in Lachesis muta muta (Bushmaster).